The following is a 239-amino-acid chain: MAVVTLSEMMEAGAHFGHQTRRWNPKMSRYIYCARNGVHIIDLVQTAICMNNAYKWTRSSARSGKRFLFVGTKKQASEVVALEATRCGASYVNQRWLGGMLTNWTTMKARIDRLKDLERMESSGAIAMRPKKEASVLRRELERLQKYLGGLKGMRRLPDVVVLVDQRRETNAVLEARKLDIPLVSMLDTNCDPDLCEVPIPCNDDAVRSVQLVLGRLADAINEGRHGTNDQRGADDSDD.

This sequence belongs to the universal ribosomal protein uS2 family.

This Prochlorococcus marinus (strain MIT 9313) protein is Small ribosomal subunit protein uS2.